A 209-amino-acid polypeptide reads, in one-letter code: Uracil phosphoribosyltransferase (209 aa).

5-phospho-alpha-D-ribose 1-diphosphate is bound by residues Arg79, Arg104, and 131-139 (DPMLATGGS). Uracil is bound by residues Ile194 and 199–201 (GDA). Asp200 is a 5-phospho-alpha-D-ribose 1-diphosphate binding site.

Belongs to the UPRTase family. Mg(2+) is required as a cofactor.

The enzyme catalyses UMP + diphosphate = 5-phospho-alpha-D-ribose 1-diphosphate + uracil. It functions in the pathway pyrimidine metabolism; UMP biosynthesis via salvage pathway; UMP from uracil: step 1/1. Its activity is regulated as follows. Allosterically activated by GTP. Catalyzes the conversion of uracil and 5-phospho-alpha-D-ribose 1-diphosphate (PRPP) to UMP and diphosphate. The chain is Uracil phosphoribosyltransferase from Finegoldia magna (strain ATCC 29328 / DSM 20472 / WAL 2508) (Peptostreptococcus magnus).